The primary structure comprises 474 residues: L-arabinose isomerase 2 (474 aa).

Residues glutamate 306, glutamate 331, histidine 348, and histidine 447 each contribute to the Mn(2+) site.

It belongs to the arabinose isomerase family. It depends on Mn(2+) as a cofactor.

It carries out the reaction beta-L-arabinopyranose = L-ribulose. The protein operates within carbohydrate degradation; L-arabinose degradation via L-ribulose; D-xylulose 5-phosphate from L-arabinose (bacterial route): step 1/3. In terms of biological role, catalyzes the conversion of L-arabinose to L-ribulose. The polypeptide is L-arabinose isomerase 2 (Bacillus licheniformis (strain ATCC 14580 / DSM 13 / JCM 2505 / CCUG 7422 / NBRC 12200 / NCIMB 9375 / NCTC 10341 / NRRL NRS-1264 / Gibson 46)).